The primary structure comprises 120 residues: Large ribosomal subunit protein uL18 (120 aa).

This sequence belongs to the universal ribosomal protein uL18 family. Part of the 50S ribosomal subunit; part of the 5S rRNA/L5/L18/L25 subcomplex. Contacts the 5S and 23S rRNAs.

This is one of the proteins that bind and probably mediate the attachment of the 5S RNA into the large ribosomal subunit, where it forms part of the central protuberance. This Methylobacterium nodulans (strain LMG 21967 / CNCM I-2342 / ORS 2060) protein is Large ribosomal subunit protein uL18.